Reading from the N-terminus, the 1165-residue chain is Transient receptor potential cation channel subfamily M member 5 (1165 aa).

The Cytoplasmic portion of the chain corresponds to M1–A715. The residue at position 121 (S121) is a Phosphoserine. Residues E212, C324, D333, D336, and E337 each coordinate Ca(2+). Residues P716–L740 form a helical membrane-spanning segment. Topologically, residues D741 to S751 are extracellular. Residues A752 to Q771 traverse the membrane as a helical segment. Ca(2+)-binding residues include E768 and Q771. The Cytoplasmic segment spans residues S772–N792. A helical membrane pass occupies residues W793–R811. Ca(2+)-binding residues include N794 and D797. Over M812–E818 the chain is Extracellular. Residues A819–I841 traverse the membrane as a helical segment. At H842 to I850 the chain is on the cytoplasmic side. The chain crosses the membrane as a helical span at residues I851–L880. Residues L881–D889 lie on the Extracellular side of the membrane. An intramembrane region (pore-forming) is located at residues W890 to I930. A Selectivity filter motif is present at residues F904–Q906. Topologically, residues L931 to A942 are extracellular. A helical transmembrane segment spans residues N943–Q977. At E978–H1165 the chain is on the cytoplasmic side. E994 contacts Ca(2+). Residues R1122–H1165 form a disordered region. A compositionally biased stretch (polar residues) spans A1132–Q1141. Residues T1156–H1165 are compositionally biased toward basic and acidic residues.

This sequence belongs to the transient receptor (TC 1.A.4) family. LTrpC subfamily. TRPM5 sub-subfamily. Homotetramer.

Its subcellular location is the cell membrane. It carries out the reaction Na(+)(in) = Na(+)(out). It catalyses the reaction K(+)(in) = K(+)(out). Ca(2+)-activated cation channel. Displays voltage dependence modulation. Regulated by PI(4,5)P2 levels. PI(4,5)P 2 reverses the Ca(2+) -induced desensitization of channels. Is highly temperature-sensitive. Its function is as follows. Monovalent cation-selective ion channel activated by intracellular Ca(2+) in a voltage- and temperature-dependent manner. Mediates the transport of Na(+), K(+) and Cs(+) ions equally well. Activated directly by increase in intracellular Ca(2+), but is impermeable to it. The activation mechanism of TRPM5 involves a multistep process. TRPM5 activation involves ligand binding (i.e., tastant molecule, glucose stimulation) to Gq/G-protein coupled receptors (GPCR) and leads to the breakdown of phosphatidylinositol bisphosphate (PIP2) into diacylglycerol (DAG) and inositol trisphosphate (IP3), IP3 binds to its receptors in the endoplasmic reticulum and cause Ca(2+) release. Simultaneously with the intracellular Ca(2+) release, DAG activates the protein kinase C (PKC), which phosphorylates the TRPM5 channel. This phosphorylation combined with the bound Ca(2+), leads to a robust inward current allowing the entry of sodium ions (Na+) into the cell. This ion influx depolarizes the cell membrane, generating action potentials that propagate TRPM5 signals. This chain is Transient receptor potential cation channel subfamily M member 5, found in Danio rerio (Zebrafish).